A 343-amino-acid polypeptide reads, in one-letter code: Transcription factor MYB11 (343 aa).

2 consecutive HTH myb-type domains span residues 9-61 (KVGI…INYL) and 62-116 (RSDI…SRKL). DNA-binding regions (H-T-H motif) lie at residues 37 to 61 (WRSLPKNAGLKRCGKSCRLRWINYL) and 89 to 112 (WSTIASNLPGRTDNEIKNYWNSHL). The interval 126-146 (ANTVENAPPPPKRRPGRTSRS) is disordered.

In terms of tissue distribution, expressed in seedlings, roots, cotyledons, leaves and apical meristems.

The protein localises to the nucleus. Modulates overall growth by reducing the proliferation activity of meristematic cells and delaying development. Flavonol-specific transcription activator involved in the regulation of several genes of flavonoid biosynthesis. Activates the expression of CHS, CHI, F3H and FLS1. Confers tolerance to UV-B. The protein is Transcription factor MYB11 of Arabidopsis thaliana (Mouse-ear cress).